We begin with the raw amino-acid sequence, 200 residues long: Signal peptidase complex catalytic subunit SEC11 (200 aa).

Residues M1–T15 lie on the Cytoplasmic side of the membrane. Residues L16–W33 traverse the membrane as a helical; Signal-anchor for type II membrane protein segment. The Lumenal portion of the chain corresponds to K34–E200. Residue N41 is glycosylated (N-linked (GlcNAc...) asparagine). Residues S53 and H92 each act as charge relay system in the active site. Positions G101–M131 are disordered. Over residues G103–S119 the composition is skewed to basic and acidic residues. Catalysis depends on D142, which acts as the Charge relay system. Positions V186–L197 are C-terminal short (CTS) helix.

Belongs to the peptidase S26B family. As to quaternary structure, component of the signal peptidase complex (SPC) composed of a catalytic subunit SEC11 and three accessory subunits SPC1, SPC2 and SPC3. The complex induces a local thinning of the ER membrane which is used to measure the length of the signal peptide (SP) h-region of protein substrates. This ensures the selectivity of the complex towards h-regions shorter than 18-20 amino acids. SPC associates with the translocon complex.

The protein localises to the endoplasmic reticulum membrane. It carries out the reaction Cleavage of hydrophobic, N-terminal signal or leader sequences from secreted and periplasmic proteins.. Functionally, catalytic component of the signal peptidase complex (SPC) which catalyzes the cleavage of N-terminal signal sequences from nascent proteins as they are translocated into the lumen of the endoplasmic reticulum. Specifically cleaves N-terminal signal peptides that contain a hydrophobic alpha-helix (h-region) shorter than 18-20 amino acids. The sequence is that of Signal peptidase complex catalytic subunit SEC11 (SEC11) from Arthroderma gypseum (strain ATCC MYA-4604 / CBS 118893) (Microsporum gypseum).